The sequence spans 104 residues: Large ribosomal subunit protein uL24 (104 aa).

It belongs to the universal ribosomal protein uL24 family. In terms of assembly, part of the 50S ribosomal subunit.

In terms of biological role, one of two assembly initiator proteins, it binds directly to the 5'-end of the 23S rRNA, where it nucleates assembly of the 50S subunit. Its function is as follows. One of the proteins that surrounds the polypeptide exit tunnel on the outside of the subunit. The chain is Large ribosomal subunit protein uL24 from Escherichia coli O81 (strain ED1a).